The primary structure comprises 618 residues: DNA mismatch repair protein MutL (618 aa).

It belongs to the DNA mismatch repair MutL/HexB family.

In terms of biological role, this protein is involved in the repair of mismatches in DNA. It is required for dam-dependent methyl-directed DNA mismatch repair. May act as a 'molecular matchmaker', a protein that promotes the formation of a stable complex between two or more DNA-binding proteins in an ATP-dependent manner without itself being part of a final effector complex. This Porphyromonas gingivalis (strain ATCC 33277 / DSM 20709 / CIP 103683 / JCM 12257 / NCTC 11834 / 2561) protein is DNA mismatch repair protein MutL.